The sequence spans 146 residues: Snaclec 1 (146 aa).

The first 23 residues, 1 to 23 (MGRFIFMSFGLLVVFLSLSGTGA), serve as a signal peptide directing secretion. Intrachain disulfides connect Cys25-Cys36, Cys53-Cys142, and Cys119-Cys134. The 112-residue stretch at 32–143 (YEGHCYRVFQ…CSRTYSFVCK (112 aa)) folds into the C-type lectin domain.

The protein belongs to the snaclec family. Heterodimer; disulfide-linked. As to expression, expressed by the venom gland.

The protein localises to the secreted. In terms of biological role, interferes with one step of hemostasis (modulation of platelet aggregation, or coagulation cascade, for example). This is Snaclec 1 from Sistrurus catenatus edwardsii (Desert massasauga).